A 223-amino-acid polypeptide reads, in one-letter code: NLP effector protein 2 (223 aa).

Residues 90–100 (AIMYSWYFPKD) carry the Conserved undecapeptide motif motif. The short motif at 107–113 (GHRHDWE) is the Conserved p motif element.

The protein belongs to the Necrosis inducing protein (NPP1) family.

It is found in the secreted. Its subcellular location is the host cytoplasm. Its function is as follows. Probable secreted effector that may act as a pathogen-associated molecular pattern (PAMP) recognized by the plant immune system. Seems not to induce necrosis, neither in several susceptible or resistant Vitis species nor in the dicot model plant Nicotiana benthamiana. The chain is NLP effector protein 2 from Plasmopara viticola (Downy mildew of grapevine).